A 968-amino-acid polypeptide reads, in one-letter code: Protein translocase subunit SecA 1 (968 aa).

ATP contacts are provided by residues Q86, 104–108 (GEGKT), and D493. 2 stretches are compositionally biased toward basic and acidic residues: residues 858-868 (EAEKTEDKAED) and 883-898 (ESAK…ESVA). The disordered stretch occupies residues 858–968 (EAEKTEDKAE…KCHGAPKSRV (111 aa)). The Zn(2+) site is built by C949, C951, C960, and H961. A compositionally biased stretch (basic residues) spans 955-968 (KKYKKCHGAPKSRV).

The protein belongs to the SecA family. Monomer and homodimer. Part of the essential Sec protein translocation apparatus which comprises SecA, SecYEG and auxiliary proteins SecDF. Other proteins may also be involved. It depends on Zn(2+) as a cofactor.

The protein localises to the cell membrane. The protein resides in the cytoplasm. It catalyses the reaction ATP + H2O + cellular proteinSide 1 = ADP + phosphate + cellular proteinSide 2.. Its function is as follows. Part of the Sec protein translocase complex. Interacts with the SecYEG preprotein conducting channel. Has a central role in coupling the hydrolysis of ATP to the transfer of proteins into and across the cell membrane, serving as an ATP-driven molecular motor driving the stepwise translocation of polypeptide chains across the membrane. In Thermobifida fusca (strain YX), this protein is Protein translocase subunit SecA 1.